A 479-amino-acid polypeptide reads, in one-letter code: uncharacterized protein (479 aa).

The next 10 helical transmembrane spans lie at I11 to I31, I43 to V63, G90 to L110, S151 to E171, I195 to G215, W223 to Y243, K274 to H294, I295 to T315, T328 to F348, and W447 to M467.

It belongs to the SLC13A/DASS transporter (TC 2.A.47) family. DIT1 subfamily.

It is found in the cell inner membrane. This is an uncharacterized protein from Haemophilus influenzae (strain ATCC 51907 / DSM 11121 / KW20 / Rd).